We begin with the raw amino-acid sequence, 607 residues long: Arginine--tRNA ligase (607 aa).

Positions 147–157 match the 'HIGH' region motif; sequence PNIAKEMHVGH.

Belongs to the class-I aminoacyl-tRNA synthetase family. In terms of assembly, monomer.

Its subcellular location is the cytoplasm. It carries out the reaction tRNA(Arg) + L-arginine + ATP = L-arginyl-tRNA(Arg) + AMP + diphosphate. This Prochlorococcus marinus (strain NATL2A) protein is Arginine--tRNA ligase.